The primary structure comprises 379 residues: Sulfate adenylyltransferase (379 aa).

This sequence belongs to the sulfate adenylyltransferase family.

The catalysed reaction is sulfate + ATP + H(+) = adenosine 5'-phosphosulfate + diphosphate. It participates in sulfur metabolism; hydrogen sulfide biosynthesis; sulfite from sulfate: step 1/3. This Pyrococcus abyssi (strain GE5 / Orsay) protein is Sulfate adenylyltransferase (sat).